We begin with the raw amino-acid sequence, 105 residues long: Extracellular guanyl-specific ribonuclease Fl1 (105 aa).

2 cysteine pairs are disulfide-bonded: Cys5–Cys101 and Cys23–Cys82. His39 is a catalytic residue. Glu57 functions as the Proton acceptor in the catalytic mechanism. His90 functions as the Proton donor in the catalytic mechanism.

This sequence belongs to the ribonuclease N1/T1 family.

It carries out the reaction [RNA] containing guanosine + H2O = an [RNA fragment]-3'-guanosine-3'-phosphate + a 5'-hydroxy-ribonucleotide-3'-[RNA fragment].. This chain is Extracellular guanyl-specific ribonuclease Fl1, found in Gibberella baccata (Fusarium lateritium).